Here is a 364-residue protein sequence, read N- to C-terminus: Isoflavone 4'-O-methyltransferase (364 aa).

S-adenosyl-L-methionine is bound by residues 206 to 209, Asp-230, 230 to 231, 250 to 251, and Lys-264; these read VGGG, DQ, and DM. His-268 serves as the catalytic Proton acceptor.

It belongs to the class I-like SAM-binding methyltransferase superfamily. Cation-independent O-methyltransferase family. COMT subfamily. As to quaternary structure, homodimer.

It carries out the reaction a 4'-hydroxyisoflavone + S-adenosyl-L-methionine = a 4'-methoxyisoflavone + S-adenosyl-L-homocysteine + H(+). The catalysed reaction is (2R,3S)-2,4',7-trihydroxyisoflavanone + S-adenosyl-L-methionine = (2R,3S)-2,7-dihydroxy-4'-methoxyisoflavanone + S-adenosyl-L-homocysteine + H(+). 2-hydroxyisoflavanone 4'-O-methyltransferase involved in the biosynthesis of the phytoalexin medicarpin. Has also an in vitro (+)-6a-hydroxymaackiain-3-0-methyltransferase activity, converting the pterocarpan 6a-hydroxymaackiain into pisatin. No activity with di- or trihydroxylated isoflavones, including daidzein and genistein, or with (-)-medicarpin and maackiain. The dual activity for either 3- or 4'-O-methylation depends upon substrate availability. The protein is Isoflavone 4'-O-methyltransferase (HI4'OMT) of Medicago truncatula (Barrel medic).